The following is a 661-amino-acid chain: Heme transporter BhuA (661 aa).

Residues 1-23 form the signal peptide; it reads MKFTRTLVLASTFLLATVATSQA. Residues 48–159 enclose the TBDR plug domain; that stretch reads KDNIEATGGT…AAGAIRYETV (112 aa). In terms of domain architecture, TBDR beta-barrel spans 170 to 661; the sequence is TFGARIIGSY…TFTFQTAFKF (492 aa).

It belongs to the TonB-dependent receptor family.

It localises to the cell outer membrane. Functionally, heme transporter. This Brucella suis biovar 1 (strain 1330) protein is Heme transporter BhuA (bhuA).